The following is a 204-amino-acid chain: Outer-membrane lipoprotein carrier protein (204 aa).

A signal peptide spans 1 to 21; it reads MKKLLVACCVVSGMMSASVLA.

The protein belongs to the LolA family. As to quaternary structure, monomer.

It localises to the periplasm. Participates in the translocation of lipoproteins from the inner membrane to the outer membrane. Only forms a complex with a lipoprotein if the residue after the N-terminal Cys is not an aspartate (The Asp acts as a targeting signal to indicate that the lipoprotein should stay in the inner membrane). This Edwardsiella ictaluri (strain 93-146) protein is Outer-membrane lipoprotein carrier protein.